A 347-amino-acid chain; its full sequence is Photosystem II protein D1 (347 aa).

3 helical membrane-spanning segments follow: residues 32–49 (YIGWFGILMFPLLVLATV), 121–136 (HFILGAGAYMGREWEF), and 145–159 (WIFVAFSAPLVAASA). H121 contributes to the chlorophyll a binding site. Y129 lines the pheophytin a pocket. Residues D173 and E192 each coordinate [CaMn4O5] cluster. Residues 200 to 221 (FHILGVAAVFGGSLFSAMHGSL) form a helical membrane-spanning segment. H201 contributes to the chlorophyll a binding site. Residues H218 and 267–268 (SF) contribute to the a quinone site. H218 is a binding site for Fe cation. Position 275 (H275) interacts with Fe cation. Residues 277–291 (FLAAWPVIGIWFTAL) traverse the membrane as a helical segment. Residues H335, E336, D345, and A347 each contribute to the [CaMn4O5] cluster site.

Belongs to the reaction center PufL/M/PsbA/D family. In terms of assembly, PSII is composed of 1 copy each of membrane proteins PsbA, PsbB, PsbC, PsbD, PsbE, PsbF, PsbH, PsbI, PsbJ, PsbK, PsbL, PsbM, PsbT, PsbX, PsbY, PsbZ, Psb30/Ycf12, at least 3 peripheral proteins of the oxygen-evolving complex and a large number of cofactors. It forms dimeric complexes. The D1/D2 heterodimer binds P680, chlorophylls that are the primary electron donor of PSII, and subsequent electron acceptors. It shares a non-heme iron and each subunit binds pheophytin, quinone, additional chlorophylls, carotenoids and lipids. D1 provides most of the ligands for the Mn4-Ca-O5 cluster of the oxygen-evolving complex (OEC). There is also a Cl(-1) ion associated with D1 and D2, which is required for oxygen evolution. The PSII complex binds additional chlorophylls, carotenoids and specific lipids. is required as a cofactor. In terms of processing, tyr-164 forms a radical intermediate that is referred to as redox-active TyrZ, YZ or Y-Z.

It is found in the plastid. The protein resides in the chloroplast thylakoid membrane. It carries out the reaction 2 a plastoquinone + 4 hnu + 2 H2O = 2 a plastoquinol + O2. Its function is as follows. Photosystem II (PSII) is a light-driven water:plastoquinone oxidoreductase that uses light energy to abstract electrons from H(2)O, generating O(2) and a proton gradient subsequently used for ATP formation. It consists of a core antenna complex that captures photons, and an electron transfer chain that converts photonic excitation into a charge separation. The D1/D2 (PsbA/PsbD) reaction center heterodimer binds P680, the primary electron donor of PSII as well as several subsequent electron acceptors. In Heterocapsa niei (Dinoflagellate), this protein is Photosystem II protein D1.